The chain runs to 335 residues: Syntaxin-18 (335 aa).

The Cytoplasmic segment spans residues 1–309 (MAVDITLLFR…EDIREAIKNN (309 aa)). 2 stretches are compositionally biased toward basic and acidic residues: residues 168-182 (KLEP…ESTS) and 192-208 (KDSE…EKIL). The interval 168–226 (KLEPEPNTKTRESTSSEKVSQSPSKDSEENPATEERPEKILAETQPELGTWGDGKGEDE) is disordered. Residues 243–305 (IGEMNSLFDE…KEGNEDIREA (63 aa)) form the t-SNARE coiled-coil homology domain. Residues 310–330 (AGFRVWILFFLVMCSFSLLFL) form a helical; Anchor for type IV membrane protein membrane-spanning segment. Residues 331–335 (DWYDS) lie on the Vesicular side of the membrane.

It belongs to the syntaxin family. Component of a SNARE complex consisting of STX18, USE1L, BNIP1/SEC20L, and SEC22B. RINT1/TIP20L and ZW10 are associated with the complex through interaction with BNIP1/SEC20L. Interacts directly with USE1L and BNIP1/SEC20L. In terms of tissue distribution, ubiquitous.

The protein localises to the endoplasmic reticulum membrane. The protein resides in the golgi apparatus membrane. Its function is as follows. Syntaxin that may be involved in targeting and fusion of Golgi-derived retrograde transport vesicles with the ER. The sequence is that of Syntaxin-18 (STX18) from Homo sapiens (Human).